The chain runs to 538 residues: Bifunctional purine biosynthesis protein PurH (538 aa).

The MGS-like domain maps to 8–158; it reads IPAPDKVEIK…KNHAYVTILT (151 aa).

It belongs to the PurH family.

The enzyme catalyses (6R)-10-formyltetrahydrofolate + 5-amino-1-(5-phospho-beta-D-ribosyl)imidazole-4-carboxamide = 5-formamido-1-(5-phospho-D-ribosyl)imidazole-4-carboxamide + (6S)-5,6,7,8-tetrahydrofolate. It catalyses the reaction IMP + H2O = 5-formamido-1-(5-phospho-D-ribosyl)imidazole-4-carboxamide. Its pathway is purine metabolism; IMP biosynthesis via de novo pathway; 5-formamido-1-(5-phospho-D-ribosyl)imidazole-4-carboxamide from 5-amino-1-(5-phospho-D-ribosyl)imidazole-4-carboxamide (10-formyl THF route): step 1/1. The protein operates within purine metabolism; IMP biosynthesis via de novo pathway; IMP from 5-formamido-1-(5-phospho-D-ribosyl)imidazole-4-carboxamide: step 1/1. The polypeptide is Bifunctional purine biosynthesis protein PurH (Rhizobium etli (strain ATCC 51251 / DSM 11541 / JCM 21823 / NBRC 15573 / CFN 42)).